A 128-amino-acid chain; its full sequence is Large ribosomal subunit protein bL12c (128 aa).

The protein belongs to the bacterial ribosomal protein bL12 family. As to quaternary structure, homodimer. Part of the ribosomal stalk of the 50S ribosomal subunit. Forms a multimeric L10(L12)X complex, where L10 forms an elongated spine to which 2 to 4 L12 dimers bind in a sequential fashion. Binds GTP-bound translation factors.

Its subcellular location is the plastid. It is found in the chloroplast. Functionally, forms part of the ribosomal stalk which helps the ribosome interact with GTP-bound translation factors. Is thus essential for accurate translation. This Phaeodactylum tricornutum (strain CCAP 1055/1) protein is Large ribosomal subunit protein bL12c.